The primary structure comprises 241 residues: Platelet-derived growth factor subunit B (241 aa).

An N-terminal signal peptide occupies residues 1–20; sequence MNRCWALFLPLCCYLRLVSA. The propeptide at 21–81 is removed in mature form; it reads EGDPIPEELY…ELESSSRGRR (61 aa). N63 carries an N-linked (GlcNAc...) asparagine glycan. 3 cysteine pairs are disulfide-bonded: C97/C141, C130/C178, and C134/C180. Residues 191–241 constitute a propeptide, removed in mature form; the sequence is RSPGTSREQRAKTPQARVTIRTVRIRRPPKGKHRKFKHTHDKAALKETLGA. Over residues 217-230 the composition is skewed to basic residues; sequence RPPKGKHRKFKHTH. The tract at residues 217-241 is disordered; the sequence is RPPKGKHRKFKHTHDKAALKETLGA.

Belongs to the PDGF/VEGF growth factor family. In terms of assembly, antiparallel homodimer; disulfide-linked. Antiparallel heterodimer with PDGFA; disulfide-linked. The PDGFB homodimer interacts with PDGFRA and PDGFRB homodimers, and with heterodimers formed by PDGFRA and PDGFRB. The heterodimer composed of PDGFA and PDGFB interacts with PDGFRB homodimers, and with heterodimers formed by PDGFRA and PDGFRB. Interacts with XLKD1. Interacts with LRP1. Interacts with SORL1 (via the N-terminal ectodomain). Interacts with CD82; this interaction inhibits PDGFB-mediated signaling pathway. In terms of tissue distribution, localized to vascular smooth muscle cells. Also weakly expressed by cortical interstitial cells but absent in tubules. Up-regulated in areas of renal fibrosis. In mice with unilateral ureteral obstruction, an increased expression in interstitial cells and in some tubules observed after day 4.

It localises to the secreted. In terms of biological role, growth factor that plays an essential role in the regulation of embryonic development, cell proliferation, cell migration, survival and chemotaxis. Potent mitogen for cells of mesenchymal origin. Required for normal proliferation and recruitment of pericytes and vascular smooth muscle cells in the central nervous system, skin, lung, heart and placenta. Required for normal blood vessel development, and for normal development of kidney glomeruli. Plays an important role in wound healing. Signaling is modulated by the formation of heterodimers with PDGFA. The polypeptide is Platelet-derived growth factor subunit B (Pdgfb) (Mus musculus (Mouse)).